We begin with the raw amino-acid sequence, 418 residues long: Probable mitochondrial adenine nucleotide transporter BTL2 (418 aa).

3 Solcar repeats span residues 122 to 205, 215 to 300, and 329 to 414; these read MNTR…YRKQ, ATNF…LKSS, and LGPI…MKIV. The next 6 helical transmembrane spans lie at 127–147, 180–200, 221–241, 276–296, 335–355, and 383–403; these read HLWA…PLER, GNLL…CAYD, FVAG…LDTI, LVPS…VYDI, LMYG…FEVV, and IPAL…SASI.

The protein belongs to the mitochondrial carrier (TC 2.A.29) family.

The protein resides in the mitochondrion inner membrane. Its function is as follows. Probable mitochondrial adenylate carrier that catalyzes the transport of ATP, ADP and AMP. The polypeptide is Probable mitochondrial adenine nucleotide transporter BTL2 (Arabidopsis thaliana (Mouse-ear cress)).